The sequence spans 362 residues: D-alanine--D-alanine ligase (362 aa).

In terms of domain architecture, ATP-grasp spans 134-345 (KILAQRAGVP…YPDLITRLIR (212 aa)). 170-225 (GQLGTSNLFVKPSNQGSSVGITHVTDDSNYAEALAEAFKYDDKVLVEEGIVGTEVE) contributes to the ATP binding site. Residues D298, E312, and N314 each contribute to the Mg(2+) site.

It belongs to the D-alanine--D-alanine ligase family. Mg(2+) is required as a cofactor. It depends on Mn(2+) as a cofactor.

It is found in the cytoplasm. The enzyme catalyses 2 D-alanine + ATP = D-alanyl-D-alanine + ADP + phosphate + H(+). It participates in cell wall biogenesis; peptidoglycan biosynthesis. Cell wall formation. This Lactobacillus delbrueckii subsp. bulgaricus (strain ATCC 11842 / DSM 20081 / BCRC 10696 / JCM 1002 / NBRC 13953 / NCIMB 11778 / NCTC 12712 / WDCM 00102 / Lb 14) protein is D-alanine--D-alanine ligase.